The sequence spans 318 residues: Probable 3-hydroxyisobutyrate dehydrogenase-like 3, mitochondrial (318 aa).

NAD(+)-binding positions include 35–64 (TRIGWIGIGIMGSAMVSHIIAAGYSVTVYA) and S129. K203 is a catalytic residue. K271 contacts NAD(+).

This sequence belongs to the HIBADH-related family. 3-hydroxyisobutyrate dehydrogenase subfamily.

The protein localises to the mitochondrion. It catalyses the reaction 3-hydroxy-2-methylpropanoate + NAD(+) = 2-methyl-3-oxopropanoate + NADH + H(+). It participates in amino-acid degradation; L-valine degradation. The chain is Probable 3-hydroxyisobutyrate dehydrogenase-like 3, mitochondrial from Arabidopsis thaliana (Mouse-ear cress).